We begin with the raw amino-acid sequence, 176 residues long: Flavodoxin (176 aa).

The Flavodoxin-like domain maps to 4–172 (IGIFFGTDTG…RLASWLEEIK (169 aa)).

Belongs to the flavodoxin family. FMN is required as a cofactor.

Its function is as follows. Low-potential electron donor to a number of redox enzymes. NifF is the electron donor to nitrogenase. The sequence is that of Flavodoxin (nifF) from Klebsiella pneumoniae.